The chain runs to 300 residues: Acetylglutamate kinase (300 aa).

Substrate-binding positions include 72–73 (GG), Arg-94, and Asn-197.

It belongs to the acetylglutamate kinase family. ArgB subfamily.

It localises to the cytoplasm. The enzyme catalyses N-acetyl-L-glutamate + ATP = N-acetyl-L-glutamyl 5-phosphate + ADP. It functions in the pathway amino-acid biosynthesis; L-arginine biosynthesis; N(2)-acetyl-L-ornithine from L-glutamate: step 2/4. Catalyzes the ATP-dependent phosphorylation of N-acetyl-L-glutamate. This is Acetylglutamate kinase from Aromatoleum aromaticum (strain DSM 19018 / LMG 30748 / EbN1) (Azoarcus sp. (strain EbN1)).